The sequence spans 166 residues: Regulatory protein RecX (166 aa).

This sequence belongs to the RecX family.

The protein resides in the cytoplasm. In terms of biological role, modulates RecA activity. In Salmonella newport (strain SL254), this protein is Regulatory protein RecX.